Here is a 202-residue protein sequence, read N- to C-terminus: Large ribosomal subunit protein eL13 (202 aa).

The interval 183–202 is disordered; sequence GIREKRAKEKAEAEAEKAKK.

This sequence belongs to the eukaryotic ribosomal protein eL13 family. Component of the large ribosomal subunit. Mature ribosomes consist of a small (40S) and a large (60S) subunit. The 40S subunit contains about 32 different proteins and 1 molecule of RNA (18S). The 60S subunit contains 45 different proteins and 3 molecules of RNA (25S, 5.8S and 5S).

Its subcellular location is the cytoplasm. Its function is as follows. Component of the ribosome, a large ribonucleoprotein complex responsible for the synthesis of proteins in the cell. The small ribosomal subunit (SSU) binds messenger RNAs (mRNAs) and translates the encoded message by selecting cognate aminoacyl-transfer RNA (tRNA) molecules. The large subunit (LSU) contains the ribosomal catalytic site termed the peptidyl transferase center (PTC), which catalyzes the formation of peptide bonds, thereby polymerizing the amino acids delivered by tRNAs into a polypeptide chain. The nascent polypeptides leave the ribosome through a tunnel in the LSU and interact with protein factors that function in enzymatic processing, targeting, and the membrane insertion of nascent chains at the exit of the ribosomal tunnel. This Candida albicans (strain SC5314 / ATCC MYA-2876) (Yeast) protein is Large ribosomal subunit protein eL13.